The primary structure comprises 365 residues: Galactoside alpha-(1,2)-fucosyltransferase 1 (365 aa).

The Cytoplasmic portion of the chain corresponds to 1 to 8; the sequence is MWPLSHRH. Residues 9–25 form a helical; Signal-anchor for type II membrane protein membrane-spanning segment; it reads LCLAFLLVCVLSAISFF. Residues 26–365 are Lumenal-facing; sequence LHIYQDSIRH…LSPLWTLAEP (340 aa). Asparagine 65, asparagine 301, and asparagine 327 each carry an N-linked (GlcNAc...) asparagine glycan.

It belongs to the glycosyltransferase 11 family.

The protein resides in the golgi apparatus. Its subcellular location is the golgi stack membrane. The catalysed reaction is a beta-D-galactosyl-(1-&gt;4)-N-acetyl-beta-D-glucosaminyl derivative + GDP-beta-L-fucose = an alpha-L-Fuc-(1-&gt;2)-beta-D-Gal-(1-&gt;4)-beta-D-GlcNAc derivative + GDP + H(+). The enzyme catalyses a ganglioside GA1 + GDP-beta-L-fucose = a ganglioside Fuc-GA1 + GDP + H(+). It catalyses the reaction a beta-D-Gal-(1-&gt;3)-beta-D-GlcNAc-(1-&gt;3)-beta-D-Gal-(1-&gt;4)-beta-D-Glc-(1&lt;-&gt;1')-Cer(d18:1(4E)) + GDP-beta-L-fucose = alpha-L-fucosyl-(1-&gt;2)- beta-D-galactosyl-(1-&gt;3)-N-acetyl-beta-D-glucosaminyl-(1-&gt;3)-beta-D-galactosyl-(1-&gt;4)-beta-D-glucosyl-(1&lt;-&gt;1')-N-acylsphing-4-enine + GDP + H(+). It carries out the reaction a neolactoside nLc4Cer(d18:1(4E)) + GDP-beta-L-fucose = a neolactoside IV(2)-alpha-Fuc-nLc4Cer(d18:1(4E)) + GDP + H(+). The catalysed reaction is a ganglioside GM1 + GDP-beta-L-fucose = a ganglioside Fuc-GM1 + GDP + H(+). The enzyme catalyses beta-D-galactosyl-(1-&gt;3)-N-acetyl-D-galactosamine + GDP-beta-L-fucose = alpha-L-fucosyl-(1-&gt;2)-beta-D-galactosyl-(1-&gt;3)-N-acetyl-D-galactosamine + GDP + H(+). It participates in protein modification; protein glycosylation. Catalyzes the transfer of L-fucose, from a guanosine diphosphate-beta-L-fucose, to the terminal galactose residue of glycoconjugates through an alpha(1,2) linkage leading to H antigen synthesis that is an intermediate substrate in the synthesis of ABO blood group antigens. H antigen is essential for maturation of the glomerular layer of the main olfactory bulb, in cell migration and early cell-cell contacts during tumor associated angiogenesis. Preferentially fucosylates soluble lactose and to a lesser extent fucosylates glycolipids gangliosides GA1 and GM1a. In Mico humeralifer (Black and white tassel-ear marmoset), this protein is Galactoside alpha-(1,2)-fucosyltransferase 1.